Consider the following 293-residue polypeptide: Shikimate dehydrogenase (NADP(+)) (293 aa).

Shikimate-binding positions include 20–22 (SLT) and Thr-72. The active-site Proton acceptor is Lys-76. Residues Asn-97 and Asp-112 each contribute to the shikimate site. NADP(+)-binding positions include 136 to 140 (GAGGA) and Ile-230. Tyr-232 is a binding site for shikimate. Gly-253 contributes to the NADP(+) binding site.

This sequence belongs to the shikimate dehydrogenase family. Homodimer.

The enzyme catalyses shikimate + NADP(+) = 3-dehydroshikimate + NADPH + H(+). The protein operates within metabolic intermediate biosynthesis; chorismate biosynthesis; chorismate from D-erythrose 4-phosphate and phosphoenolpyruvate: step 4/7. Functionally, involved in the biosynthesis of the chorismate, which leads to the biosynthesis of aromatic amino acids. Catalyzes the reversible NADPH linked reduction of 3-dehydroshikimate (DHSA) to yield shikimate (SA). In Arthrobacter sp. (strain FB24), this protein is Shikimate dehydrogenase (NADP(+)).